We begin with the raw amino-acid sequence, 154 residues long: UPF0547 protein C16orf87 homolog (154 aa).

The disordered stretch occupies residues Asn43 to Glu119. The segment covering Val68 to Arg84 has biased composition (basic and acidic residues). Ser91 carries the phosphoserine modification. A coiled-coil region spans residues Lys104–Lys132. Residues Lys109–Glu119 show a composition bias toward basic and acidic residues.

The protein belongs to the UPF0547 family.

The sequence is that of UPF0547 protein C16orf87 homolog from Mus musculus (Mouse).